The following is a 137-amino-acid chain: Sec-independent protein translocase protein TatB (137 aa).

A helical membrane pass occupies residues 2–22; it reads FANIGWGEMLILVIAGLVILG. The tract at residues 92 to 137 is disordered; the sequence is FFTGKFDQQNGKPAAGQEKPVTPVNPPVTATPPSESTATPFDSDAT. Over residues 122–131 the composition is skewed to low complexity; sequence TPPSESTATP.

The protein belongs to the TatB family. The Tat system comprises two distinct complexes: a TatABC complex, containing multiple copies of TatA, TatB and TatC subunits, and a separate TatA complex, containing only TatA subunits. Substrates initially bind to the TatABC complex, which probably triggers association of the separate TatA complex to form the active translocon.

Its subcellular location is the cell membrane. Part of the twin-arginine translocation (Tat) system that transports large folded proteins containing a characteristic twin-arginine motif in their signal peptide across membranes. Together with TatC, TatB is part of a receptor directly interacting with Tat signal peptides. TatB may form an oligomeric binding site that transiently accommodates folded Tat precursor proteins before their translocation. This Mycobacterium sp. (strain JLS) protein is Sec-independent protein translocase protein TatB.